The chain runs to 492 residues: Glutamyl-tRNA(Gln) amidotransferase subunit A (492 aa).

Catalysis depends on charge relay system residues Lys-84 and Ser-159. Ser-183 serves as the catalytic Acyl-ester intermediate.

This sequence belongs to the amidase family. GatA subfamily. In terms of assembly, heterotrimer of A, B and C subunits.

The enzyme catalyses L-glutamyl-tRNA(Gln) + L-glutamine + ATP + H2O = L-glutaminyl-tRNA(Gln) + L-glutamate + ADP + phosphate + H(+). In terms of biological role, allows the formation of correctly charged Gln-tRNA(Gln) through the transamidation of misacylated Glu-tRNA(Gln) in organisms which lack glutaminyl-tRNA synthetase. The reaction takes place in the presence of glutamine and ATP through an activated gamma-phospho-Glu-tRNA(Gln). This Anaeromyxobacter sp. (strain K) protein is Glutamyl-tRNA(Gln) amidotransferase subunit A.